A 245-amino-acid chain; its full sequence is Polynucleotide 3'-phosphatase (245 aa).

This sequence belongs to the DNA 3' phosphatase family.

The protein localises to the nucleus. It catalyses the reaction a 3'end (2'-deoxyribonucleotide 3'-phosphate)-DNA + H2O = a 3'-end 2'-deoxyribonucleotide-DNA + phosphate. In terms of biological role, dephosphorylate DNA's 3'-phosphate termini. Has a role in the repair of breaks in single-stranded DNA. This Saccharomyces mikatae (Yeast) protein is Polynucleotide 3'-phosphatase (TPP1).